The sequence spans 91 residues: DNA/RNA-binding protein Alba (91 aa).

Lys11 is modified (N6-acetyllysine).

Belongs to the histone-like Alba family. Post-translationally, acetylated. Acetylation at Lys-11 decreases DNA-binding affinity.

The protein resides in the cytoplasm. It localises to the chromosome. Binds double-stranded DNA tightly but without sequence specificity. Incubation with DNA in vitro gives fibrous structures 10.3 +/- 1.1 nm in thickness (naked DNA is 1.83 +/- 0.37 nm). This protein does not significantly compact DNA. This Thermococcus kodakarensis (strain ATCC BAA-918 / JCM 12380 / KOD1) (Pyrococcus kodakaraensis (strain KOD1)) protein is DNA/RNA-binding protein Alba.